Here is a 214-residue protein sequence, read N- to C-terminus: Protein DMP6 (214 aa).

4 helical membrane passes run 52–72, 83–103, 143–163, and 178–198; these read LANLLPTGTVLAFQILSPICT, FMTALLVSICGFSCFILSFTD, FIDFVHAIMSFLVFGAVVLFD, and VVELLTTLPVAVGVFCSMVFA.

It belongs to the plant DMP1 protein family. As to expression, expressed constitutively in leaves, stems, flowers, siliques and roots (e.g. root hairs).

The protein resides in the vacuole membrane. In terms of biological role, involved in membrane remodeling. This Arabidopsis thaliana (Mouse-ear cress) protein is Protein DMP6.